The sequence spans 573 residues: 2-succinyl-5-enolpyruvyl-6-hydroxy-3-cyclohexene-1-carboxylate synthase (573 aa).

The protein belongs to the TPP enzyme family. MenD subfamily. Homodimer. It depends on Mg(2+) as a cofactor. Requires Mn(2+) as cofactor. Thiamine diphosphate serves as cofactor.

It catalyses the reaction isochorismate + 2-oxoglutarate + H(+) = 5-enolpyruvoyl-6-hydroxy-2-succinyl-cyclohex-3-ene-1-carboxylate + CO2. It participates in quinol/quinone metabolism; 1,4-dihydroxy-2-naphthoate biosynthesis; 1,4-dihydroxy-2-naphthoate from chorismate: step 2/7. The protein operates within quinol/quinone metabolism; menaquinone biosynthesis. Catalyzes the thiamine diphosphate-dependent decarboxylation of 2-oxoglutarate and the subsequent addition of the resulting succinic semialdehyde-thiamine pyrophosphate anion to isochorismate to yield 2-succinyl-5-enolpyruvyl-6-hydroxy-3-cyclohexene-1-carboxylate (SEPHCHC). The protein is 2-succinyl-5-enolpyruvyl-6-hydroxy-3-cyclohexene-1-carboxylate synthase of Shewanella baltica (strain OS195).